The sequence spans 90 residues: Kunitz-type serine protease inhibitor C4 (90 aa).

The N-terminal stretch at 1-24 (MSSGGLLLLLGLLTLWAELTPISG) is a signal peptide. A BPTI/Kunitz inhibitor domain is found at 31-81 (CYLPADPGECMAYIRSFYYDSESKKCKEFIYGGCHGNANNFPTRDKCRQTC). Intrachain disulfides connect Cys31–Cys81, Cys40–Cys64, and Cys56–Cys77. A propeptide spanning residues 85–90 (RKGRHT) is cleaved from the precursor.

It belongs to the venom Kunitz-type family. Expressed by the venom gland.

Its subcellular location is the secreted. Functionally, serine protease inhibitor. This chain is Kunitz-type serine protease inhibitor C4, found in Daboia siamensis (Eastern Russel's viper).